A 129-amino-acid chain; its full sequence is HTH-type transcriptional regulator DdrOP3 (129 aa).

The HTH cro/C1-type domain occupies 7 to 61; the sequence is LRELRQERGLRLKDIAGAAQISVPYLSDLERGRTNPSLETLQSLASTYGITVHDL. Positions 18-37 form a DNA-binding region, H-T-H motif; the sequence is LKDIAGAAQISVPYLSDLER.

In terms of processing, cleaved between Leu-106 and Arg-107 by the IrrE metalloprotease after exposure to radiation. Cleavage inactivates DdrOP3, leading to derepression of the target genes.

Repressor specific for genes preceded by a radiation/desiccation response motif (RDRM) site, which is present upstream of several radiation-induced genes. This chain is HTH-type transcriptional regulator DdrOP3, found in Deinococcus deserti (strain DSM 17065 / CIP 109153 / LMG 22923 / VCD115).